A 185-amino-acid polypeptide reads, in one-letter code: MISTSDFKNGTNILVDGEPYQIAWFQNHKPGKGGAVMRVKLRHLKKGGIIERTFKSGEKFKALTITRQKKRFLYKESNNFNFMDMDTYEQITVHPELLGKMVNFLKENLEVEAIYLENELIGIDLPVIIEMTIAEAEHGIKGDSVSNTTKTAKLETGADIHVPLFIKEGDRIKVDTRTGEYVERA.

Belongs to the elongation factor P family.

The protein resides in the cytoplasm. It participates in protein biosynthesis; polypeptide chain elongation. Its function is as follows. Involved in peptide bond synthesis. Stimulates efficient translation and peptide-bond synthesis on native or reconstituted 70S ribosomes in vitro. Probably functions indirectly by altering the affinity of the ribosome for aminoacyl-tRNA, thus increasing their reactivity as acceptors for peptidyl transferase. The sequence is that of Elongation factor P from Endomicrobium trichonymphae.